The sequence spans 247 residues: Protein NipSnap homolog 3A (247 aa).

Residues Lys-48 and Lys-166 each carry the N6-acetyllysine modification.

The protein belongs to the NipSnap family. As to quaternary structure, interacts with the Salmonella typhimurium virulence protein spiC. As to expression, ubiquitous. Highly expressed in liver, kidney and muscle. Expressed at intermediate level in brain, heart, colon, thymus, kidney, small intestine, placenta, lung, leukocytes and spleen.

It is found in the cytoplasm. It localises to the cytosol. The sequence is that of Protein NipSnap homolog 3A (NIPSNAP3A) from Homo sapiens (Human).